Consider the following 199-residue polypeptide: Recombination protein RecR (199 aa).

The segment at 57–72 (CQKCRTFTEQSLCPIC) adopts a C4-type zinc-finger fold. In terms of domain architecture, Toprim spans 81-176 (DTLCVVETPA…AVSRIAHGVP (96 aa)).

This sequence belongs to the RecR family.

In terms of biological role, may play a role in DNA repair. It seems to be involved in an RecBC-independent recombinational process of DNA repair. It may act with RecF and RecO. The sequence is that of Recombination protein RecR from Shewanella amazonensis (strain ATCC BAA-1098 / SB2B).